We begin with the raw amino-acid sequence, 245 residues long: Bis(5'-nucleosyl)-tetraphosphatase PrpE [asymmetrical] (245 aa).

Belongs to the PrpE family. Ni(2+) is required as a cofactor.

The catalysed reaction is P(1),P(4)-bis(5'-guanosyl) tetraphosphate + H2O = GMP + GTP + 2 H(+). Its function is as follows. Asymmetrically hydrolyzes Ap4p to yield AMP and ATP. The sequence is that of Bis(5'-nucleosyl)-tetraphosphatase PrpE [asymmetrical] from Anoxybacillus flavithermus (strain DSM 21510 / WK1).